A 280-amino-acid chain; its full sequence is MAIRKYKPTTPGRRGASVSDFAEITRSTPEKSLVRPLHGHGGRNAHGRITTRHKGGGHKRAYRVIDFGRNDKDGVNAKVAHIEYDPNRTARIALLHYLDGEKRYIIAPNGLSQGDVVESGANADIKPGNNLPLRNIPAGTLVHAVELRPGGGAKLARSAGSSIQLLGKEASYASLRMPSGEIRRVDVRCRATVGEVGNAEQANINWGKAGRMRWKGKRPSVRGVVMNPVDHPHGGGEGKTSGGRHPVSPWGKPEGRTRNPNKASNKLIVRRRRTGKKHGR.

Disordered regions lie at residues 27-58 (STPE…GGGH) and 226-280 (MNPV…KHGR). Composition is skewed to basic residues over residues 37-58 (LHGH…GGGH) and 268-280 (IVRR…KHGR).

Belongs to the universal ribosomal protein uL2 family. Part of the 50S ribosomal subunit. Forms a bridge to the 30S subunit in the 70S ribosome.

In terms of biological role, one of the primary rRNA binding proteins. Required for association of the 30S and 50S subunits to form the 70S ribosome, for tRNA binding and peptide bond formation. It has been suggested to have peptidyltransferase activity; this is somewhat controversial. Makes several contacts with the 16S rRNA in the 70S ribosome. In Mycobacterium ulcerans (strain Agy99), this protein is Large ribosomal subunit protein uL2.